Here is a 378-residue protein sequence, read N- to C-terminus: Myoglobin (378 aa).

Ala-2 bears the Blocked amino end (Ala) mark. His-332 serves as a coordination point for heme.

Belongs to the indoleamine 2,3-dioxygenase family. In terms of assembly, homodimer. It depends on heme as a cofactor.

Serves a reserve supply of oxygen and facilitates the movement of oxygen within muscles. This chain is Myoglobin, found in Haliotis diversicolor (Abalone).